A 334-amino-acid chain; its full sequence is Coiled-coil domain-containing protein 89 (334 aa).

Residues 75–318 (EAAQRFQSER…EAYKKHSGDL (244 aa)) are a coiled coil.

The protein belongs to the CCDC89 family. Interacts (via C-terminus) with hey1/bc8 (via Orange domain). In terms of tissue distribution, in adults, expressed at varying levels in different organs including the liver and brain, with highest expression in the testis.

The protein resides in the cytoplasm. Its subcellular location is the nucleus. The chain is Coiled-coil domain-containing protein 89 from Xenopus laevis (African clawed frog).